The sequence spans 342 residues: Dihydroorotase (342 aa).

The Zn(2+) site is built by histidine 13 and histidine 15. Substrate-binding positions include 15–17 (HLR) and asparagine 41. Zn(2+) is bound by residues lysine 97, histidine 134, and histidine 172. An N6-carboxylysine modification is found at lysine 97. Histidine 134 provides a ligand contact to substrate. Substrate is bound at residue leucine 217. Aspartate 245 provides a ligand contact to Zn(2+). Aspartate 245 is a catalytic residue. Residues histidine 249 and alanine 261 each contribute to the substrate site.

The protein belongs to the metallo-dependent hydrolases superfamily. DHOase family. Class II DHOase subfamily. Homodimer. Zn(2+) serves as cofactor.

The enzyme catalyses (S)-dihydroorotate + H2O = N-carbamoyl-L-aspartate + H(+). The protein operates within pyrimidine metabolism; UMP biosynthesis via de novo pathway; (S)-dihydroorotate from bicarbonate: step 3/3. Functionally, catalyzes the reversible cyclization of carbamoyl aspartate to dihydroorotate. The protein is Dihydroorotase of Shewanella amazonensis (strain ATCC BAA-1098 / SB2B).